Consider the following 421-residue polypeptide: Aspartokinase (421 aa).

An ATP-binding site is contributed by 7–10 (KYGG). 25–30 (RIVETK) is a binding site for substrate. S41 provides a ligand contact to ATP. Substrate is bound by residues 45–49 (DTTDD), E74, 125–126 (LD), 151–154 (RGGS), and S154. Residues 174-175 (TD), 180-185 (FTADPR), and K210 each bind ATP. ACT domains are found at residues 267–348 (VTVV…GKVS) and 349–421 (LIGA…GTGR). Substrate is bound by residues D274, 274-279 (DVPGYA), 292-294 (NID), Q298, 360-361 (VT), 374-375 (NI), and 381-382 (SE).

The protein belongs to the aspartokinase family. As to quaternary structure, heterotetramer consisting of 2 isoforms Alpha (catalytic and regulation) and of a homodimer of 2 isoforms Beta (regulation).

It carries out the reaction L-aspartate + ATP = 4-phospho-L-aspartate + ADP. Its pathway is amino-acid biosynthesis; L-lysine biosynthesis via DAP pathway; (S)-tetrahydrodipicolinate from L-aspartate: step 1/4. The protein operates within amino-acid biosynthesis; L-methionine biosynthesis via de novo pathway; L-homoserine from L-aspartate: step 1/3. It functions in the pathway amino-acid biosynthesis; L-threonine biosynthesis; L-threonine from L-aspartate: step 1/5. Feedback inhibition by lysine and threonine. Catalyzes the phosphorylation of the beta-carboxyl group of aspartic acid with ATP to yield 4-phospho-L-aspartate, which is involved in the branched biosynthetic pathway leading to the biosynthesis of amino acids lysine, threonine, isoleucine and methionine. The sequence is that of Aspartokinase (ask) from Mycolicibacterium smegmatis (Mycobacterium smegmatis).